The primary structure comprises 585 residues: Lipoprotein LpqB (585 aa).

The first 17 residues, 1–17 (MGRKLLGLLMLAVLLAG), serve as a signal peptide directing secretion. Cys-18 carries the N-palmitoyl cysteine lipid modification. Cys-18 carries the S-diacylglycerol cysteine lipid modification. Disordered stretches follow at residues 24-46 (SSAP…KPTP) and 560-585 (PSAD…VLPG).

The protein belongs to the LpqB lipoprotein family.

It is found in the cell membrane. The protein is Lipoprotein LpqB of Mycobacterium paratuberculosis.